The sequence spans 511 residues: Sodium/hydrogen exchanger 9B1 (511 aa).

The span at 1-10 shows a compositional bias: basic and acidic residues; sequence MHTTESKDEH. The tract at residues 1–41 is disordered; it reads MHTTESKDEHLEDENFQTSTTPQSLIDPNSTAHEETKTVIS. Polar residues predominate over residues 16–31; sequence FQTSTTPQSLIDPNST. Helical transmembrane passes span 67-87, 95-115, 116-136, 152-172, 187-207, 215-235, 260-280, 284-304, 337-357, 368-388, 398-418, 431-451, and 472-492; these read IITNGVILFVIWCTTWSVLGS, LFGLLIIFCSAIIGGKILQLI, RIPLVPPLPPLLGMLLAGFTI, WSSILRSTALTVILIRAGLGL, LAVGPCLMEASAAAVFSHFIM, FLLGFVLGAVSPAIVVPSMMV, VLAITGFNTCLSIVFSSGGIV, IASIKSVSISLLAGIVLGFFV, IGLHGTGGLFTLVLSFIAGTK, IITNVWDIFQPLLFGLVGAEV, IGIFVATLSLALCVRILVTYI, IFIALAWMPKATVQAVLGPLV, and VAFLAILITAPNGALLMGILG.

The protein belongs to the monovalent cation:proton antiporter 1 (CPA1) transporter (TC 2.A.36) family.

The protein localises to the cell projection. It is found in the cilium. The protein resides in the flagellum membrane. In terms of biological role, sperm-specific Na(+)/H(+) exchanger involved in intracellular pH regulation of spermatozoa. Involved in sperm motility and fertility. The chain is Sodium/hydrogen exchanger 9B1 (SLC9B1) from Macaca fascicularis (Crab-eating macaque).